A 551-amino-acid polypeptide reads, in one-letter code: Chaperonin GroEL (551 aa).

ATP contacts are provided by residues 30–33 (TLGP), lysine 51, 87–91 (DGTTT), glycine 415, 478–480 (NAA), and aspartate 494.

It belongs to the chaperonin (HSP60) family. In terms of assembly, forms a cylinder of 14 subunits composed of two heptameric rings stacked back-to-back. Interacts with the co-chaperonin GroES.

Its subcellular location is the cytoplasm. It carries out the reaction ATP + H2O + a folded polypeptide = ADP + phosphate + an unfolded polypeptide.. In terms of biological role, together with its co-chaperonin GroES, plays an essential role in assisting protein folding. The GroEL-GroES system forms a nano-cage that allows encapsulation of the non-native substrate proteins and provides a physical environment optimized to promote and accelerate protein folding. The chain is Chaperonin GroEL from Syntrophotalea carbinolica (strain DSM 2380 / NBRC 103641 / GraBd1) (Pelobacter carbinolicus).